The sequence spans 246 residues: 1-(5-phosphoribosyl)-5-[(5-phosphoribosylamino)methylideneamino] imidazole-4-carboxamide isomerase (246 aa).

D8 (proton acceptor) is an active-site residue. D130 (proton donor) is an active-site residue.

Belongs to the HisA/HisF family.

It is found in the cytoplasm. The catalysed reaction is 1-(5-phospho-beta-D-ribosyl)-5-[(5-phospho-beta-D-ribosylamino)methylideneamino]imidazole-4-carboxamide = 5-[(5-phospho-1-deoxy-D-ribulos-1-ylimino)methylamino]-1-(5-phospho-beta-D-ribosyl)imidazole-4-carboxamide. It functions in the pathway amino-acid biosynthesis; L-histidine biosynthesis; L-histidine from 5-phospho-alpha-D-ribose 1-diphosphate: step 4/9. This is 1-(5-phosphoribosyl)-5-[(5-phosphoribosylamino)methylideneamino] imidazole-4-carboxamide isomerase from Alcanivorax borkumensis (strain ATCC 700651 / DSM 11573 / NCIMB 13689 / SK2).